Here is a 382-residue protein sequence, read N- to C-terminus: Alcohol dehydrogenase 1 (382 aa).

Zn(2+)-binding residues include C49, T51, H71, C101, C104, C107, C115, and C179. The an alcohol site is built by T51 and H71. T51 contributes to the NAD(+) binding site. Residues 204-209 (GLGAVG), D228, R233, T275, V298, 298-300 (VGV), F325, and R375 each bind NAD(+).

Belongs to the zinc-containing alcohol dehydrogenase family. Homodimer. It depends on Zn(2+) as a cofactor.

Its subcellular location is the cytoplasm. The catalysed reaction is a primary alcohol + NAD(+) = an aldehyde + NADH + H(+). It catalyses the reaction a secondary alcohol + NAD(+) = a ketone + NADH + H(+). In terms of biological role, this protein is responsible for the conversion of alcohols to aldehydes in plants and is important for NAD metabolism during anaerobic respiration. The polypeptide is Alcohol dehydrogenase 1 (ADH1) (Petunia hybrida (Petunia)).